Reading from the N-terminus, the 342-residue chain is Cytosolic Fe-S cluster assembly factor NBP35 (342 aa).

Cysteine 33, cysteine 47, cysteine 50, and cysteine 56 together coordinate [4Fe-4S] cluster. 86-93 (GKGGVGKS) serves as a coordination point for ATP. [4Fe-4S] cluster-binding residues include cysteine 259 and cysteine 262.

It belongs to the Mrp/NBP35 ATP-binding proteins family. NUBP1/NBP35 subfamily. Heterotetramer of 2 NBP35 and 2 CFD1 chains. The cofactor is [4Fe-4S] cluster.

It localises to the cytoplasm. Functionally, component of the cytosolic iron-sulfur (Fe/S) protein assembly (CIA) machinery. Required for maturation of extramitochondrial Fe-S proteins. The NBP35-CFD1 heterotetramer forms a Fe-S scaffold complex, mediating the de novo assembly of an Fe-S cluster and its transfer to target apoproteins. The protein is Cytosolic Fe-S cluster assembly factor NBP35 of Gibberella zeae (strain ATCC MYA-4620 / CBS 123657 / FGSC 9075 / NRRL 31084 / PH-1) (Wheat head blight fungus).